Reading from the N-terminus, the 205-residue chain is Molybdenum cofactor guanylyltransferase (205 aa).

Residues Leu14–Gly16, Lys27, Asp77, and Asp107 each bind GTP. Asp107 is a binding site for Mg(2+).

The protein belongs to the MobA family. As to quaternary structure, monomer. Mg(2+) serves as cofactor.

Its subcellular location is the cytoplasm. The enzyme catalyses Mo-molybdopterin + GTP + H(+) = Mo-molybdopterin guanine dinucleotide + diphosphate. In terms of biological role, transfers a GMP moiety from GTP to Mo-molybdopterin (Mo-MPT) cofactor (Moco or molybdenum cofactor) to form Mo-molybdopterin guanine dinucleotide (Mo-MGD) cofactor. The sequence is that of Molybdenum cofactor guanylyltransferase from Burkholderia ambifaria (strain MC40-6).